The primary structure comprises 161 residues: Large ribosomal subunit protein uL15 (161 aa).

Residues 1-50 (MKLSDIADNAGSRKKRMRIGRGIGSGKGKTGGRGGKGQTARSGVRINGFE) are disordered. Over residues 21 to 37 (RGIGSGKGKTGGRGGKG) the composition is skewed to gly residues.

This sequence belongs to the universal ribosomal protein uL15 family. In terms of assembly, part of the 50S ribosomal subunit.

In terms of biological role, binds to the 23S rRNA. The polypeptide is Large ribosomal subunit protein uL15 (Nitrobacter winogradskyi (strain ATCC 25391 / DSM 10237 / CIP 104748 / NCIMB 11846 / Nb-255)).